The following is a 692-amino-acid chain: Translation initiation factor IF-2 (692 aa).

Residues 51–114 (KAKPENAKKG…KPAETPGKIT (64 aa)) form a disordered region. Over residues 59–84 (KGQNQKQSNNQQQNRQKQNQKNQSKP) the composition is skewed to low complexity. Over residues 85–94 (NKNKKQKGPK) the composition is skewed to basic residues. The tr-type G domain occupies 193 to 362 (ERPAVVTIMG…LLVSEVEELK (170 aa)). The tract at residues 202–209 (GHVDHGKT) is G1. Residue 202–209 (GHVDHGKT) participates in GTP binding. The interval 227-231 (GITQH) is G2. Positions 248-251 (DTPG) are G3. GTP is bound by residues 248–252 (DTPGH) and 302–305 (NKMD). Positions 302-305 (NKMD) are G4. The segment at 338–340 (SAI) is G5.

This sequence belongs to the TRAFAC class translation factor GTPase superfamily. Classic translation factor GTPase family. IF-2 subfamily.

The protein localises to the cytoplasm. In terms of biological role, one of the essential components for the initiation of protein synthesis. Protects formylmethionyl-tRNA from spontaneous hydrolysis and promotes its binding to the 30S ribosomal subunits. Also involved in the hydrolysis of GTP during the formation of the 70S ribosomal complex. In Oceanobacillus iheyensis (strain DSM 14371 / CIP 107618 / JCM 11309 / KCTC 3954 / HTE831), this protein is Translation initiation factor IF-2.